A 201-amino-acid polypeptide reads, in one-letter code: MNVNQVDLETVCGVTSVLPENTQPEFAFAGKSNVGKSSLINGLMNRKSFARTSSQPGKTQTINFYHLNEKLYFVDLPGYGYAKVSSELKAKWGKMIEKYLRTSTQLKVIFLLIDIRHEPSANDKDMYEWIVHNGFEPVIIATKLDKINRSQRDKHIKMVRTGLCAGANTKILPFSSLSKEGKDDIWRCIEQFLEVPDTENK.

One can recognise an EngB-type G domain in the interval 22–195 (TQPEFAFAGK…WRCIEQFLEV (174 aa)). GTP contacts are provided by residues 30–37 (GKSNVGKS), 57–61 (GKTQT), 75–78 (DLPG), 142–145 (TKLD), and 174–176 (FSS). Positions 37 and 59 each coordinate Mg(2+).

It belongs to the TRAFAC class TrmE-Era-EngA-EngB-Septin-like GTPase superfamily. EngB GTPase family. The cofactor is Mg(2+).

In terms of biological role, necessary for normal cell division and for the maintenance of normal septation. This Lachnoclostridium phytofermentans (strain ATCC 700394 / DSM 18823 / ISDg) (Clostridium phytofermentans) protein is Probable GTP-binding protein EngB.